A 158-amino-acid polypeptide reads, in one-letter code: MSTNGVMEKGFVTTSLDSVINWGRTGSMWPMTFGLACCAVEMMQAGASRYDLDRFGIVFRPSPRQSDVMIVAGTLCNKMAPALRKVYDQMAEPRWVISMGSCANGGGYYHYSYSVVRGCDRIVPVDIYVPGCPPTAEALLYGIIQLQNKIHRTNTIAR.

Residues Cys37, Cys38, Cys102, and Cys132 each contribute to the [4Fe-4S] cluster site.

Belongs to the complex I 20 kDa subunit family. In terms of assembly, NDH-1 is composed of 14 different subunits. Subunits NuoB, C, D, E, F, and G constitute the peripheral sector of the complex. It depends on [4Fe-4S] cluster as a cofactor.

The protein localises to the cell inner membrane. It catalyses the reaction a quinone + NADH + 5 H(+)(in) = a quinol + NAD(+) + 4 H(+)(out). Its function is as follows. NDH-1 shuttles electrons from NADH, via FMN and iron-sulfur (Fe-S) centers, to quinones in the respiratory chain. Couples the redox reaction to proton translocation (for every two electrons transferred, four hydrogen ions are translocated across the cytoplasmic membrane), and thus conserves the redox energy in a proton gradient. The protein is NADH-quinone oxidoreductase subunit B 2 of Nitrosospira multiformis (strain ATCC 25196 / NCIMB 11849 / C 71).